Here is a 99-residue protein sequence, read N- to C-terminus: Acylphosphatase-2 (99 aa).

N-acetylserine is present on S2. The 91-residue stretch at 9-99 folds into the Acylphosphatase-like domain; that stretch reads SVDYEVFGRV…LEYSNFSIRY (91 aa). Active-site residues include R24 and N42. The residue at position 93 (S93) is a Phosphoserine.

The protein belongs to the acylphosphatase family.

The enzyme catalyses an acyl phosphate + H2O = a carboxylate + phosphate + H(+). Its physiological role is not yet clear. This chain is Acylphosphatase-2 (ACYP2), found in Homo sapiens (Human).